Reading from the N-terminus, the 397-residue chain is Acetate kinase (397 aa).

Residue Asn8 coordinates Mg(2+). Lys15 provides a ligand contact to ATP. Arg89 provides a ligand contact to substrate. Asp146 (proton donor/acceptor) is an active-site residue. Residues 206-210, 283-285, and 331-335 contribute to the ATP site; these read HVGNG, DMR, and GIGEN. Position 383 (Glu383) interacts with Mg(2+).

This sequence belongs to the acetokinase family. In terms of assembly, homodimer. The cofactor is Mg(2+). Requires Mn(2+) as cofactor.

It localises to the cytoplasm. It catalyses the reaction acetate + ATP = acetyl phosphate + ADP. Its pathway is metabolic intermediate biosynthesis; acetyl-CoA biosynthesis; acetyl-CoA from acetate: step 1/2. Catalyzes the formation of acetyl phosphate from acetate and ATP. Can also catalyze the reverse reaction. The protein is Acetate kinase of Streptococcus thermophilus (strain ATCC BAA-491 / LMD-9).